We begin with the raw amino-acid sequence, 468 residues long: ATP synthase subunit beta (468 aa).

Residue 148–155 (GGAGVGKT) participates in ATP binding.

This sequence belongs to the ATPase alpha/beta chains family. In terms of assembly, F-type ATPases have 2 components, CF(1) - the catalytic core - and CF(0) - the membrane proton channel. CF(1) has five subunits: alpha(3), beta(3), gamma(1), delta(1), epsilon(1). CF(0) has three main subunits: a(1), b(2) and c(9-12). The alpha and beta chains form an alternating ring which encloses part of the gamma chain. CF(1) is attached to CF(0) by a central stalk formed by the gamma and epsilon chains, while a peripheral stalk is formed by the delta and b chains.

The protein resides in the cell inner membrane. The catalysed reaction is ATP + H2O + 4 H(+)(in) = ADP + phosphate + 5 H(+)(out). Its function is as follows. Produces ATP from ADP in the presence of a proton gradient across the membrane. The catalytic sites are hosted primarily by the beta subunits. In Xanthomonas axonopodis pv. citri (strain 306), this protein is ATP synthase subunit beta.